A 340-amino-acid chain; its full sequence is Phospho-N-acetylmuramoyl-pentapeptide-transferase (340 aa).

Helical transmembrane passes span Met-3–Ile-23, Gly-53–Phe-73, Ala-79–Leu-99, Met-119–Thr-139, Ile-144–Val-164, Ile-176–Phe-196, Glu-200–Phe-220, Val-227–Ala-247, Val-250–Leu-270, and Val-315–Leu-335.

This sequence belongs to the glycosyltransferase 4 family. MraY subfamily. It depends on Mg(2+) as a cofactor.

The protein localises to the cell membrane. The catalysed reaction is UDP-N-acetyl-alpha-D-muramoyl-L-alanyl-gamma-D-glutamyl-L-lysyl-D-alanyl-D-alanine + di-trans,octa-cis-undecaprenyl phosphate = Mur2Ac(oyl-L-Ala-gamma-D-Glu-L-Lys-D-Ala-D-Ala)-di-trans,octa-cis-undecaprenyl diphosphate + UMP. Its pathway is cell wall biogenesis; peptidoglycan biosynthesis. Functionally, catalyzes the initial step of the lipid cycle reactions in the biosynthesis of the cell wall peptidoglycan: transfers peptidoglycan precursor phospho-MurNAc-pentapeptide from UDP-MurNAc-pentapeptide onto the lipid carrier undecaprenyl phosphate, yielding undecaprenyl-pyrophosphoryl-MurNAc-pentapeptide, known as lipid I. In Streptococcus thermophilus (strain ATCC BAA-250 / LMG 18311), this protein is Phospho-N-acetylmuramoyl-pentapeptide-transferase.